Here is a 281-residue protein sequence, read N- to C-terminus: DSC E3 ubiquitin ligase complex subunit 4 (281 aa).

Helical transmembrane passes span 22 to 42 (LCYA…LLLL), 62 to 82 (LPLF…RMFF), 84 to 104 (LPTA…INFI), and 115 to 135 (FITS…ILIA). Positions 145–154 (HIQASQSGLS) are enriched in polar residues. Disordered stretches follow at residues 145 to 183 (HIQA…EDLQ) and 256 to 281 (NTNS…TNPI). A compositionally biased stretch (acidic residues) spans 157 to 167 (DGDEEPSDLIT). Basic and acidic residues predominate over residues 168–183 (EDSRDTQQGQRQEDLQ).

Component of the DSC E3 ubiquitin ligase complex composed of dsc1, dsc2, dsc3 and dsc4.

The protein resides in the endoplasmic reticulum membrane. Its subcellular location is the golgi apparatus membrane. Its pathway is protein modification; protein ubiquitination. Component of the DSC E3 ubiquitin ligase complex which is required for the sre1 transcriptional activator proteolytic cleavage to release the soluble transcription factor from the membrane in low oxygen or sterol conditions. The complex also plays an important role in the multivesicular body (MVB) pathway and functions in a post-endoplasmic reticulum pathway for protein degradation. The chain is DSC E3 ubiquitin ligase complex subunit 4 (dsc4) from Schizosaccharomyces pombe (strain 972 / ATCC 24843) (Fission yeast).